The primary structure comprises 110 residues: UPF0122 protein GK1195 (110 aa).

This sequence belongs to the UPF0122 family.

Functionally, might take part in the signal recognition particle (SRP) pathway. This is inferred from the conservation of its genetic proximity to ftsY/ffh. May be a regulatory protein. The protein is UPF0122 protein GK1195 of Geobacillus kaustophilus (strain HTA426).